The following is a 589-amino-acid chain: Transmembrane 9 superfamily member 1 (589 aa).

The N-terminal stretch at 1–27 (MTVLGHPRSWSCHCLPVLILLLGIGHG) is a signal peptide. N-linked (GlcNAc...) asparagine glycosylation occurs at N178. A run of 4 helical transmembrane segments spans residues 237-257 (LSIINSMVLVFLLVGFVAVIL), 310-330 (VLGVGAQFLALGTGIIVMALL), 339-359 (GAINSAAILLYALTCCISGYV), and 373-393 (VWNIILTTSLFSVPFFLTWSV). N401 carries N-linked (GlcNAc...) asparagine glycosylation. 3 helical membrane passes run 412–432 (ILLLLTVWLLVGFPLTVIGGI), 482–502 (GILFFVFAILLSVGACISIAL), and 518–538 (SVLSVGSTGLFIFLYSVFYYA). An N-linked (GlcNAc...) asparagine glycan is attached at N542. The helical transmembrane segment at 552 to 572 (FFGYSLLTGYVFFLMLGTISF) threads the bilayer.

This sequence belongs to the nonaspanin (TM9SF) (TC 9.A.2) family.

It localises to the lysosome membrane. The protein resides in the cytoplasmic vesicle. Its subcellular location is the autophagosome membrane. Plays an essential role in autophagy. The protein is Transmembrane 9 superfamily member 1 (Tm9sf1) of Rattus norvegicus (Rat).